The following is a 5061-amino-acid chain: E3 ubiquitin-protein ligase rnf213-beta (5061 aa).

A compositionally biased stretch (basic residues) spans 1-12 (MTRKRKSGKKGK). A disordered region spans residues 1-334 (MTRKRKSGKK…QRKPSPVRAP (334 aa)). Composition is skewed to polar residues over residues 24 to 52 (GGSTSSSTTQKEGAQKGDGSSSSSTTQKD) and 75 to 87 (SDGSTSSSTTNKE). Positions 100 to 110 (LQKKGPQKRKG) are enriched in basic residues. Polar residues-rich tracts occupy residues 127–163 (QTSYPSQARSRSHGQHNISTTESGPLSKEAQTQTSAS) and 172–200 (TETVGQASQQTQTEINGNTETAEVSQPPQ). 2 stretches are compositionally biased toward basic and acidic residues: residues 217–229 (KGSESDGEKEESV) and 236–289 (LSEI…EEPK). Residues 292–301 (AAAAATGKTG) are compositionally biased toward low complexity. Over residues 306–322 (EQTNQIEANQDSTMESK) the composition is skewed to polar residues. Residues 1923-1928 (AVGKSL), Glu-2023, Asp-2074, Lys-2417, and Ser-2492 each bind ATP. Cys-3957, Cys-3960, Cys-3972, His-3974, Cys-3977, Cys-3980, Cys-3993, Cys-3996, Cys-4451, and His-4455 together coordinate Zn(2+). The RING-type zinc finger occupies 3957–3997 (CRVCLMELSEPFALPCEHVFCRSCLRRSMEREEAQHCPVCR). The RZ-type zinc-finger motif lies at 4429–4501 (MPDDHTSEAK…AYGDYDRTRP (73 aa)). The Nucleophile; for E3 ubiquitin-lipopolysaccharide ligase activity role is filled by Cys-4462. Zn(2+)-binding residues include Cys-4471 and Cys-4474.

This sequence belongs to the AAA ATPase family.

It localises to the cytoplasm. The protein resides in the cytosol. The protein localises to the lipid droplet. The catalysed reaction is S-ubiquitinyl-[E2 ubiquitin-conjugating enzyme]-L-cysteine + [acceptor protein]-L-lysine = [E2 ubiquitin-conjugating enzyme]-L-cysteine + N(6)-ubiquitinyl-[acceptor protein]-L-lysine.. It catalyses the reaction ATP + H2O = ADP + phosphate + H(+). The protein operates within protein modification; protein ubiquitination. Functionally, atypical E3 ubiquitin ligase that can catalyze ubiquitination of both proteins and lipids, and which is involved in various processes, such as lipid metabolism, angiogenesis and cell-autonomous immunity. Acts as a key immune sensor by catalyzing ubiquitination of the lipid A moiety of bacterial lipopolysaccharide (LPS) via its RZ-type zinc-finger: restricts the proliferation of cytosolic bacteria, such as Salmonella, by generating the bacterial ubiquitin coat through the ubiquitination of LPS. Ubiquitination of LPS triggers cell-autonomous immunity, such as antibacterial autophagy, leading to degradation of the microbial invader. Involved in lipid metabolism by regulating fat storage and lipid droplet formation; act by inhibiting the lipolytic process. Also regulates lipotoxicity by inhibiting desaturation of fatty acids. Also acts as an E3 ubiquitin-protein ligase via its RING-type zinc finger. Involved in the non-canonical Wnt signaling pathway in vascular development: acts by mediating ubiquitination and degradation of proteins downstream of rspo3, leading to inhibit the non-canonical Wnt signaling pathway and promoting vessel regression. Also has ATPase activity; ATPase activity is required for ubiquitination of LPS. This is E3 ubiquitin-protein ligase rnf213-beta (rnf213b) from Danio rerio (Zebrafish).